The chain runs to 475 residues: Ribulose bisphosphate carboxylase large chain (475 aa).

The propeptide occupies 1–2; the sequence is MS. The residue at position 3 (Pro3) is an N-acetylproline. An N6,N6,N6-trimethyllysine modification is found at Lys14. Substrate-binding residues include Asn123 and Thr173. Residue Lys175 is the Proton acceptor of the active site. Lys177 contacts substrate. Residues Lys201, Asp203, and Glu204 each coordinate Mg(2+). Lys201 is subject to N6-carboxylysine. His294 serves as the catalytic Proton acceptor. 3 residues coordinate substrate: Arg295, His327, and Ser379.

Belongs to the RuBisCO large chain family. Type I subfamily. Heterohexadecamer of 8 large chains and 8 small chains; disulfide-linked. The disulfide link is formed within the large subunit homodimers. Mg(2+) serves as cofactor. In terms of processing, the disulfide bond which can form in the large chain dimeric partners within the hexadecamer appears to be associated with oxidative stress and protein turnover.

The protein localises to the plastid. It localises to the chloroplast. It catalyses the reaction 2 (2R)-3-phosphoglycerate + 2 H(+) = D-ribulose 1,5-bisphosphate + CO2 + H2O. It carries out the reaction D-ribulose 1,5-bisphosphate + O2 = 2-phosphoglycolate + (2R)-3-phosphoglycerate + 2 H(+). Its function is as follows. RuBisCO catalyzes two reactions: the carboxylation of D-ribulose 1,5-bisphosphate, the primary event in carbon dioxide fixation, as well as the oxidative fragmentation of the pentose substrate in the photorespiration process. Both reactions occur simultaneously and in competition at the same active site. The protein is Ribulose bisphosphate carboxylase large chain of Notothixos subaureus (Golden mistletoe).